A 188-amino-acid chain; its full sequence is MLQLSSTQVTPVIAQGGVIAYPTEAVYGLGCDPDNDQAIEKLLAVKQRPWQKGLILVASSFEQLLPYVDVAQLTQAQLDFAHSKWPGPFTFVMPVKSHVSNKLRGEFDSIAVRVSAHPIVRELCDSLNKPLVSTSANLAGQDPVLTSRQILTDFADKIDALVLGDLGQQAQPSTIIDARSGLVLRNGQ.

Residues 3–188 (QLSSTQVTPV…RSGLVLRNGQ (186 aa)) form the YrdC-like domain.

This sequence belongs to the SUA5 family. TsaC subfamily.

The protein localises to the cytoplasm. It catalyses the reaction L-threonine + hydrogencarbonate + ATP = L-threonylcarbamoyladenylate + diphosphate + H2O. Its function is as follows. Required for the formation of a threonylcarbamoyl group on adenosine at position 37 (t(6)A37) in tRNAs that read codons beginning with adenine. Catalyzes the conversion of L-threonine, HCO(3)(-)/CO(2) and ATP to give threonylcarbamoyl-AMP (TC-AMP) as the acyladenylate intermediate, with the release of diphosphate. The chain is Threonylcarbamoyl-AMP synthase from Shewanella denitrificans (strain OS217 / ATCC BAA-1090 / DSM 15013).